The chain runs to 360 residues: COP9 signalosome complex subunit 5 (360 aa).

The MPN domain maps to 60-197 (AKISALALLK…IGAFRTYPKD (138 aa)). Zn(2+) is bound by residues H143, H145, and D156. The JAMM motif motif lies at 143-156 (HSHPGYGCWLSGID). Disordered stretches follow at residues 293-315 (LMPS…RDSS) and 341-360 (SNKA…MVEA). Positions 341–350 (SNKASTSAPD) are enriched in polar residues.

The protein belongs to the peptidase M67A family. CSN5 subfamily. In terms of assembly, component of the CSN complex, probably composed of CSN1, CSN2, CSN3, CSN4, CSN5, CSN6, CSN7 and CSN8. Interacts with MCM2.

Probable protease subunit of the COP9 signalosome complex (CSN), a complex involved in various cellular and developmental processes such as photomorphogenesis and response to hormones. The CSN complex is an essential regulator of the ubiquitin (Ubl) conjugation pathway by mediating the deneddylation of the cullin subunits of SCF-type E3 ligase complexes, leading to decrease the Ubl ligase activity of SCF. Involved in early response to iron deficiency. In Oryza sativa subsp. japonica (Rice), this protein is COP9 signalosome complex subunit 5.